The sequence spans 65 residues: Large ribosomal subunit protein bL35 (65 aa).

It belongs to the bacterial ribosomal protein bL35 family.

In Nitrosomonas europaea (strain ATCC 19718 / CIP 103999 / KCTC 2705 / NBRC 14298), this protein is Large ribosomal subunit protein bL35.